The sequence spans 392 residues: Succinate--CoA ligase [ADP-forming] subunit beta (392 aa).

The 239-residue stretch at 9–247 (KAILRKYGVA…VTEEDPLEVE (239 aa)) folds into the ATP-grasp domain. ATP is bound by residues Lys-49, 56 to 58 (GRG), Glu-102, Leu-105, and Glu-110. Residues Asn-202 and Asp-216 each contribute to the Mg(2+) site. Residues Asn-267 and 324-326 (GIL) contribute to the substrate site.

Belongs to the succinate/malate CoA ligase beta subunit family. Heterotetramer of two alpha and two beta subunits. It depends on Mg(2+) as a cofactor.

It catalyses the reaction succinate + ATP + CoA = succinyl-CoA + ADP + phosphate. The enzyme catalyses GTP + succinate + CoA = succinyl-CoA + GDP + phosphate. Its pathway is carbohydrate metabolism; tricarboxylic acid cycle; succinate from succinyl-CoA (ligase route): step 1/1. Succinyl-CoA synthetase functions in the citric acid cycle (TCA), coupling the hydrolysis of succinyl-CoA to the synthesis of either ATP or GTP and thus represents the only step of substrate-level phosphorylation in the TCA. The beta subunit provides nucleotide specificity of the enzyme and binds the substrate succinate, while the binding sites for coenzyme A and phosphate are found in the alpha subunit. The polypeptide is Succinate--CoA ligase [ADP-forming] subunit beta (Koribacter versatilis (strain Ellin345)).